Consider the following 157-residue polypeptide: Nicotinate dehydrogenase subunit A (157 aa).

The 2Fe-2S ferredoxin-type domain occupies 3-79; that stretch reads TTISLQVNGQ…GRNITTLEGL (77 aa). Residues C41, C46, C49, and C61 each contribute to the [2Fe-2S] cluster site.

[2Fe-2S] cluster is required as a cofactor.

The enzyme catalyses 2 Fe(III)-[cytochrome] + nicotinate + H2O = 2 Fe(II)-[cytochrome] + 6-hydroxynicotinate + 2 H(+). The protein operates within cofactor degradation; nicotinate degradation. Its function is as follows. Subunit of the two-component enzyme NicAB that mediates nicotinate hydroxylation, the first step in the aerobic nicotinate degradation pathway. Mediates conversion of nicotinate into 6-hydroxynicotinate (6HNA). This chain is Nicotinate dehydrogenase subunit A (nicA), found in Pseudomonas putida (strain ATCC 47054 / DSM 6125 / CFBP 8728 / NCIMB 11950 / KT2440).